We begin with the raw amino-acid sequence, 198 residues long: Superoxide dismutase [Fe] (198 aa).

Positions 27, 74, 158, and 162 each coordinate Fe cation.

The protein belongs to the iron/manganese superoxide dismutase family. Homodimer. It depends on Fe cation as a cofactor.

The protein localises to the cytoplasm. The catalysed reaction is 2 superoxide + 2 H(+) = H2O2 + O2. In terms of biological role, destroys superoxide anion radicals which are normally produced within the cells and which are toxic to biological systems. The polypeptide is Superoxide dismutase [Fe] (SODB) (Plasmodium falciparum (isolate 3D7)).